The chain runs to 211 residues: Thiamine-phosphate synthase (211 aa).

4-amino-2-methyl-5-(diphosphooxymethyl)pyrimidine contacts are provided by residues 37–41 and Asn69; that span reads QLRIK. Mg(2+) is bound by residues Asp70 and Asp89. Ser108 serves as a coordination point for 4-amino-2-methyl-5-(diphosphooxymethyl)pyrimidine. 2-[(2R,5Z)-2-carboxy-4-methylthiazol-5(2H)-ylidene]ethyl phosphate is bound at residue 134–136; sequence TQT. Residue Lys137 coordinates 4-amino-2-methyl-5-(diphosphooxymethyl)pyrimidine. 2-[(2R,5Z)-2-carboxy-4-methylthiazol-5(2H)-ylidene]ethyl phosphate is bound by residues Gly166 and 186–187; that span reads VS.

It belongs to the thiamine-phosphate synthase family. Requires Mg(2+) as cofactor.

It carries out the reaction 2-[(2R,5Z)-2-carboxy-4-methylthiazol-5(2H)-ylidene]ethyl phosphate + 4-amino-2-methyl-5-(diphosphooxymethyl)pyrimidine + 2 H(+) = thiamine phosphate + CO2 + diphosphate. The enzyme catalyses 2-(2-carboxy-4-methylthiazol-5-yl)ethyl phosphate + 4-amino-2-methyl-5-(diphosphooxymethyl)pyrimidine + 2 H(+) = thiamine phosphate + CO2 + diphosphate. The catalysed reaction is 4-methyl-5-(2-phosphooxyethyl)-thiazole + 4-amino-2-methyl-5-(diphosphooxymethyl)pyrimidine + H(+) = thiamine phosphate + diphosphate. The protein operates within cofactor biosynthesis; thiamine diphosphate biosynthesis; thiamine phosphate from 4-amino-2-methyl-5-diphosphomethylpyrimidine and 4-methyl-5-(2-phosphoethyl)-thiazole: step 1/1. In terms of biological role, condenses 4-methyl-5-(beta-hydroxyethyl)thiazole monophosphate (THZ-P) and 2-methyl-4-amino-5-hydroxymethyl pyrimidine pyrophosphate (HMP-PP) to form thiamine monophosphate (TMP). The protein is Thiamine-phosphate synthase of Escherichia coli O157:H7.